Consider the following 85-residue polypeptide: 4-hydroxyphenylacetate decarboxylase small subunit (85 aa).

Positions 4, 7, 20, 34, 43, 46, 60, and 78 each coordinate [4Fe-4S] cluster.

It belongs to the HPA decarboxylase small subunit family. Heterooctamer consisting of 4 large (HpdB) subunits and 4 small (HpdC) subunits, arranged as a tetramer of heterodimers. The cofactor is [4Fe-4S] cluster.

It carries out the reaction 4-hydroxyphenylacetate + H(+) = 4-methylphenol + CO2. The catalysed reaction is 3,4-dihydroxyphenylacetate + H(+) = 4-methylcatechol + CO2. Its function is as follows. Component of the HPA decarboxylase that decarboxylates phenylacetates with a hydroxyl group in the p-position. Active toward 4-hydroxyphenylacetate and 3,4-dihydroxyphenylacetate, forming 4-methylphenol and 4-methylcatechol, respectively. Is likely involved in the catabolism of aromatic amino acids such as tyrosine fermentation. 4-methylphenol (p-cresol) formation provides metabolic toxicity, which allows an active suppression of other microbes and may provide growth advantages for the producers in highly competitive environments. The small subunit is essential for enzymatic activity of HPA decarboxylase, and also seems to be involved in the regulation of the enzyme oligomeric state and catalytic activity. In Clostridioides difficile (strain CD196) (Peptoclostridium difficile), this protein is 4-hydroxyphenylacetate decarboxylase small subunit.